We begin with the raw amino-acid sequence, 399 residues long: MAQRQPHSPNQTLISITNDTESSSSVVSNDNTNKGWSGDNSPGIEALCAIYITYAVIISVGILGNAILIKVFFKTKSMQTVPNIFITSLAFGDLLLLLTCVPVDATHYLAEGWLFGRIGCKVLSFIRLTSVGVSVFTLTILSADRYKAVVKPLERQPSNAILKTCVKAGCVWIVSMIFALPEAIFSNVYTFRDPNKNMTFESCTSYPVSKKLLQEIHSLLCFLVFYIIPLSIISVYYSLIARTLYKSTLNIPTEEQSHARKQIESRKRIARTVLVLVALFALCWLPNHLLYLYHSFTSQTYVDPSAMHFIFTIFSRVLAFSNSCVNPFALYWLSKSFQKHFKAQLFCCKAERPEPPVADTSLTTLAVMGTVPGTGSIQMSEISVTSFTGCSVKQAEDRF.

The Extracellular portion of the chain corresponds to 1-41 (MAQRQPHSPNQTLISITNDTESSSSVVSNDNTNKGWSGDNS). N-linked (GlcNAc...) asparagine glycosylation is found at asparagine 10 and asparagine 18. The helical transmembrane segment at 42 to 63 (PGIEALCAIYITYAVIISVGIL) threads the bilayer. Residues 64-82 (GNAILIKVFFKTKSMQTVP) lie on the Cytoplasmic side of the membrane. A helical membrane pass occupies residues 83–103 (NIFITSLAFGDLLLLLTCVPV). Residues 104 to 121 (DATHYLAEGWLFGRIGCK) lie on the Extracellular side of the membrane. A disulfide bridge connects residues cysteine 120 and cysteine 203. Residues 122 to 143 (VLSFIRLTSVGVSVFTLTILSA) traverse the membrane as a helical segment. Topologically, residues 144-163 (DRYKAVVKPLERQPSNAILK) are cytoplasmic. A helical membrane pass occupies residues 164–184 (TCVKAGCVWIVSMIFALPEAI). The Extracellular portion of the chain corresponds to 185–220 (FSNVYTFRDPNKNMTFESCTSYPVSKKLLQEIHSLL). Residues 221–241 (CFLVFYIIPLSIISVYYSLIA) form a helical membrane-spanning segment. Topologically, residues 242–272 (RTLYKSTLNIPTEEQSHARKQIESRKRIART) are cytoplasmic. The helical transmembrane segment at 273–293 (VLVLVALFALCWLPNHLLYLY) threads the bilayer. The Extracellular segment spans residues 294–313 (HSFTSQTYVDPSAMHFIFTI). A helical transmembrane segment spans residues 314–333 (FSRVLAFSNSCVNPFALYWL). The Cytoplasmic portion of the chain corresponds to 334–399 (SKSFQKHFKA…CSVKQAEDRF (66 aa)). Residue cysteine 347 is the site of S-palmitoyl cysteine attachment.

It belongs to the G-protein coupled receptor 1 family. As to quaternary structure, interacts with C6orf89. In terms of tissue distribution, in germ cells in testis. Lung carcinoma cells.

The protein resides in the cell membrane. Role in sperm cell division, maturation, or function. This receptor mediates its action by association with G proteins that activate a phosphatidylinositol-calcium second messenger system. This chain is Bombesin receptor subtype-3 (BRS3), found in Homo sapiens (Human).